Consider the following 397-residue polypeptide: Ribosomal RNA large subunit methyltransferase I (397 aa).

Positions 2 to 81 (STTVYLQKDR…EQIDTEFFVR (80 aa)) constitute a PUA domain.

The protein belongs to the methyltransferase superfamily. RlmI family.

The protein localises to the cytoplasm. It carries out the reaction cytidine(1962) in 23S rRNA + S-adenosyl-L-methionine = 5-methylcytidine(1962) in 23S rRNA + S-adenosyl-L-homocysteine + H(+). Specifically methylates the cytosine at position 1962 (m5C1962) of 23S rRNA. This is Ribosomal RNA large subunit methyltransferase I from Tolumonas auensis (strain DSM 9187 / NBRC 110442 / TA 4).